Here is a 211-residue protein sequence, read N- to C-terminus: MTDLLTLEAEVRTDLGKGASRRLRHANKVPAILYGENEEPISLTLEHKNVFRAQQEEAFYSQVLTLNIAGKPVECLIKDMQRHPFKQVVMHLDFLRIDAKHAVHANAPIHFLNEDEAAKTGANISHHMNEIAITCLPKDLPEFISIDLAGLELGQTIHLSDVTFPAGVTSDELAKGEDHDLAVVSANAPKAAKVSTDDEAAAPAEEAPAAE.

The segment at 188 to 211 (APKAAKVSTDDEAAAPAEEAPAAE) is disordered. Residues 201–211 (AAPAEEAPAAE) show a composition bias toward low complexity.

Belongs to the bacterial ribosomal protein bL25 family. CTC subfamily. As to quaternary structure, part of the 50S ribosomal subunit; part of the 5S rRNA/L5/L18/L25 subcomplex. Contacts the 5S rRNA. Binds to the 5S rRNA independently of L5 and L18.

Its function is as follows. This is one of the proteins that binds to the 5S RNA in the ribosome where it forms part of the central protuberance. The protein is Large ribosomal subunit protein bL25 of Colwellia psychrerythraea (strain 34H / ATCC BAA-681) (Vibrio psychroerythus).